The following is a 153-amino-acid chain: ORM1-like protein 1 (153 aa).

Over 1-27 (MNVGVAHSEVNPNTRVMNSRGIWLTYA) the chain is Cytoplasmic. 2 helical membrane-spanning segments follow: residues 28–46 (LGVG…FSVP) and 47–64 (VVWT…YVFM). The Cytoplasmic portion of the chain corresponds to 65–105 (HAVKGTPFETPDQGKARLLTHWEQLDYGVQFTSSRKFFTIS). 2 consecutive transmembrane segments (helical) span residues 106–123 (PIIL…DTAH) and 124–140 (FVIN…PKLP). Residues 141 to 153 (QLHGVRIFGINKY) are Cytoplasmic-facing.

This sequence belongs to the ORM family. In terms of assembly, ceramide-sensitive subunit of the serine palmitoyltransferase (SPT) complex, which is also composed of SPTLC1, SPTLC2/3 and SPTSSA/B.

The protein localises to the endoplasmic reticulum membrane. In terms of biological role, plays an essential role in the homeostatic regulation of sphingolipid de novo biosynthesis by modulating the activity of the serine palmitoyltransferase (SPT) in response to ceramide levels. When complexed to SPT, the binding of ceramides to its N-terminus stabilizes a conformation that block SPT substrate entry, hence preventing SPT catalytic activity. Through this mechanism, maintains ceramide levels at sufficient concentrations for the production of complex sphingolipids, but which prevents the accumulation of ceramides to levels that trigger apoptosis. The chain is ORM1-like protein 1 (ormdl1) from Danio rerio (Zebrafish).